The sequence spans 90 residues: DNA-binding protein HU-beta (90 aa).

The protein belongs to the bacterial histone-like protein family. In terms of assembly, heterodimer of an alpha and a beta chain.

In terms of biological role, histone-like DNA-binding protein which is capable of wrapping DNA to stabilize it, and thus to prevent its denaturation under extreme environmental conditions. This is DNA-binding protein HU-beta (hupB) from Pseudomonas fluorescens (strain ATCC BAA-477 / NRRL B-23932 / Pf-5).